Consider the following 64-residue polypeptide: MTTVKFKYKGEEKQVDTSKIKKVWRVGKMISFTYDEGGGKTGRGAVSEKDAPKELLQMLEKQKK.

It belongs to the 7 kDa DNA-binding/endoribonuclease P2 family. In terms of assembly, monomer.

It is found in the cytoplasm. Can constrain negative DNA supercoils. May be involved in maintaining the integrity of the genome at high temperature. The sequence is that of DNA-binding protein 7b from Saccharolobus islandicus (strain HVE10/4) (Sulfolobus islandicus).